The chain runs to 122 residues: Large ribosomal subunit protein uL14 (122 aa).

It belongs to the universal ribosomal protein uL14 family. Part of the 50S ribosomal subunit. Forms a cluster with proteins L3 and L19. In the 70S ribosome, L14 and L19 interact and together make contacts with the 16S rRNA in bridges B5 and B8.

Its function is as follows. Binds to 23S rRNA. Forms part of two intersubunit bridges in the 70S ribosome. This chain is Large ribosomal subunit protein uL14, found in Mycobacterium sp. (strain KMS).